Here is a 389-residue protein sequence, read N- to C-terminus: Nicotinate phosphoribosyltransferase (389 aa).

His-211 bears the Phosphohistidine; by autocatalysis mark.

This sequence belongs to the NAPRTase family. Transiently phosphorylated on a His residue during the reaction cycle. Phosphorylation strongly increases the affinity for substrates and increases the rate of nicotinate D-ribonucleotide production. Dephosphorylation regenerates the low-affinity form of the enzyme, leading to product release.

It carries out the reaction nicotinate + 5-phospho-alpha-D-ribose 1-diphosphate + ATP + H2O = nicotinate beta-D-ribonucleotide + ADP + phosphate + diphosphate. It participates in cofactor biosynthesis; NAD(+) biosynthesis; nicotinate D-ribonucleotide from nicotinate: step 1/1. Its function is as follows. Catalyzes the synthesis of beta-nicotinate D-ribonucleotide from nicotinate and 5-phospho-D-ribose 1-phosphate at the expense of ATP. This chain is Nicotinate phosphoribosyltransferase, found in Desulforapulum autotrophicum (strain ATCC 43914 / DSM 3382 / VKM B-1955 / HRM2) (Desulfobacterium autotrophicum).